The following is a 427-amino-acid chain: MEKLTILLVGSGGREHALAWKIAQSPLCGRLVAAPGNPGIEAVAELRAVKATDADGLVALAQEIGADLVVVGPESALEVGLADKLAAVGIPCFGGSQRAAQLETSKAFTKDFCQRHGLPTAAYGVFEDAASAGAFLDTLEAPFVIKADGLAAGKGVVIAPDRAAADAAVVDMLGGRFGSAGARVVIEEFMHGEEASLFAVCDGKTAVLFGAAQDHKRAYDGDEGPNTGGMGTYSPPPVLTDALIDQAWRELIVPTVEGMAAEGNPYVGVLYAGLMLTPTGPKLVEYNARFGDPECQTLMLRLDSDIVPILLAAAKGELANAEPPKWREEAAICVVLAAEGYPDAPKTGGRIQGADADFGDDVVVFHAGTTREFEGRLVASGGRVLNVCALGATLSEAREAAYGALETISLEGGFYRTDIGWRALQQR.

In terms of domain architecture, ATP-grasp spans 110 to 315; that stretch reads KDFCQRHGLP…IVPILLAAAK (206 aa). 136 to 196 contributes to the ATP binding site; it reads LDTLEAPFVI…EEFMHGEEAS (61 aa). Residues E285 and N287 each contribute to the Mg(2+) site.

The protein belongs to the GARS family. Mg(2+) serves as cofactor. The cofactor is Mn(2+).

The enzyme catalyses 5-phospho-beta-D-ribosylamine + glycine + ATP = N(1)-(5-phospho-beta-D-ribosyl)glycinamide + ADP + phosphate + H(+). The protein operates within purine metabolism; IMP biosynthesis via de novo pathway; N(1)-(5-phospho-D-ribosyl)glycinamide from 5-phospho-alpha-D-ribose 1-diphosphate: step 2/2. This chain is Phosphoribosylamine--glycine ligase, found in Caulobacter vibrioides (strain ATCC 19089 / CIP 103742 / CB 15) (Caulobacter crescentus).